Reading from the N-terminus, the 294-residue chain is 4-hydroxy-tetrahydrodipicolinate synthase (294 aa).

Pyruvate is bound at residue Thr-47. Residue Tyr-135 is the Proton donor/acceptor of the active site. The active-site Schiff-base intermediate with substrate is the Lys-163. Ile-206 contacts pyruvate.

It belongs to the DapA family. In terms of assembly, homodimer.

It is found in the cytoplasm. It catalyses the reaction L-aspartate 4-semialdehyde + pyruvate = (2S,4S)-4-hydroxy-2,3,4,5-tetrahydrodipicolinate + H2O + H(+). Its pathway is amino-acid biosynthesis; L-lysine biosynthesis via DAP pathway; (S)-tetrahydrodipicolinate from L-aspartate: step 3/4. Its function is as follows. Catalyzes the condensation of (S)-aspartate-beta-semialdehyde [(S)-ASA] and pyruvate to 4-hydroxy-tetrahydrodipicolinate (HTPA). This Staphylococcus carnosus (strain TM300) protein is 4-hydroxy-tetrahydrodipicolinate synthase.